We begin with the raw amino-acid sequence, 121 residues long: MARIAGVDIPRDKRVVISLTYIFGIGKTTAQKVLADAGISEDTRVRDLTEDELNKIREQLDSYKLEGDLRRETSLNIKRLMEIGSFRGIRHRRGLPVRGQNTKNNARTRKGPRKTVANKKK.

Residues His-91–Lys-121 form a disordered region. Over residues Ala-106–Lys-121 the composition is skewed to basic residues.

It belongs to the universal ribosomal protein uS13 family. In terms of assembly, part of the 30S ribosomal subunit. Forms a loose heterodimer with protein S19. Forms two bridges to the 50S subunit in the 70S ribosome.

Functionally, located at the top of the head of the 30S subunit, it contacts several helices of the 16S rRNA. In the 70S ribosome it contacts the 23S rRNA (bridge B1a) and protein L5 of the 50S subunit (bridge B1b), connecting the 2 subunits; these bridges are implicated in subunit movement. Contacts the tRNAs in the A and P-sites. This chain is Small ribosomal subunit protein uS13, found in Lysinibacillus sphaericus (strain C3-41).